Reading from the N-terminus, the 124-residue chain is Putative outer membrane protein CT_569 (124 aa).

The first 31 residues, 1-31 (MKKTKKRKQSITLVEMMVVITLIGIIGGALA), serve as a signal peptide directing secretion.

The protein resides in the cell outer membrane. This chain is Putative outer membrane protein CT_569, found in Chlamydia trachomatis serovar D (strain ATCC VR-885 / DSM 19411 / UW-3/Cx).